The sequence spans 412 residues: Serine hydroxymethyltransferase (412 aa).

(6S)-5,6,7,8-tetrahydrofolate-binding positions include leucine 117 and glycine 121–leucine 123. Lysine 226 bears the N6-(pyridoxal phosphate)lysine mark. Serine 349–phenylalanine 351 contacts (6S)-5,6,7,8-tetrahydrofolate.

This sequence belongs to the SHMT family. As to quaternary structure, homodimer. It depends on pyridoxal 5'-phosphate as a cofactor.

The protein localises to the cytoplasm. It catalyses the reaction (6R)-5,10-methylene-5,6,7,8-tetrahydrofolate + glycine + H2O = (6S)-5,6,7,8-tetrahydrofolate + L-serine. It participates in one-carbon metabolism; tetrahydrofolate interconversion. The protein operates within amino-acid biosynthesis; glycine biosynthesis; glycine from L-serine: step 1/1. In terms of biological role, catalyzes the reversible interconversion of serine and glycine with tetrahydrofolate (THF) serving as the one-carbon carrier. This reaction serves as the major source of one-carbon groups required for the biosynthesis of purines, thymidylate, methionine, and other important biomolecules. Also exhibits THF-independent aldolase activity toward beta-hydroxyamino acids, producing glycine and aldehydes, via a retro-aldol mechanism. This is Serine hydroxymethyltransferase from Geobacillus thermodenitrificans (strain NG80-2).